A 203-amino-acid polypeptide reads, in one-letter code: MGGSLRVAVLGAPGVGKTAIIRQFLFGDYPERHRPTDSPCLYRPAVLLDGAVYDLSIRDGDVAGPGSSPRSLEEWPDPKDWSLQDTDAFVLVYDICSPDSFDYVKALRQRIAENRPAGAPEAPILVVGNKRDRQRLRFGPRRALATLVRRGWRCGYLECSAKYNWHVLRLFRELLRCALVRTRPAHPTLRLQGALHPARCSLM.

The segment at 1-203 is small GTPase-like; it reads MGGSLRVAVL…ALHPARCSLM (203 aa). Residue 11–18 participates in GTP binding; it reads GAPGVGKT. The short motif at 33–42 is the Effector region element; sequence HRPTDSPCLY. Residues 59–62 and 129–132 each bind GTP; these read DGDV and NKRD. Cysteine 200 carries the cysteine methyl ester modification. The S-farnesyl cysteine moiety is linked to residue cysteine 200. The propeptide at 201-203 is removed in mature form; it reads SLM.

This sequence belongs to the small GTPase superfamily. Ras family. Isoprenylation is essential for nucleolar localization, and the proliferation-inhibiting activity of RASL10A.

It is found in the cell membrane. The protein resides in the nucleus. Its subcellular location is the nucleolus. The enzyme catalyses GTP + H2O = GDP + phosphate + H(+). Potent inhibitor of cellular proliferation. In Mus musculus (Mouse), this protein is Ras-like protein family member 10A (Rasl10a).